Here is a 289-residue protein sequence, read N- to C-terminus: Proteasome assembly chaperone 1 (289 aa).

A disordered region spans residues 1-38; sequence MAATFFGEVVKAPCRAGTEEEEEEEEQSRRDTPEDREV. N-acetylalanine is present on Ala-2. The residue at position 18 (Thr-18) is a Phosphothreonine. The span at 27–38 shows a compositional bias: basic and acidic residues; it reads QSRRDTPEDREV. The residue at position 55 (Thr-55) is a Phosphothreonine. The residue at position 181 (Ser-181) is a Phosphoserine. Lys-265 carries the N6-acetyllysine modification.

The protein belongs to the PSMG1 family. As to quaternary structure, forms a heterodimer with PSMG2. The PSMG1-PSMG2 heterodimer interacts directly with the PSMA5 and PSMA7 proteasome alpha subunits. Degraded by the proteasome upon completion of 20S proteasome maturation. Highly expressed in testis with moderate expression in brain, liver and kidney and low levels in heart, skeletal muscle and pancreas.

It is found in the cytoplasm. Its subcellular location is the endoplasmic reticulum. Functionally, chaperone protein which promotes assembly of the 20S proteasome as part of a heterodimer with PSMG2. The PSMG1-PSMG2 heterodimer binds to the PSMA5 and PSMA7 proteasome subunits, promotes assembly of the proteasome alpha subunits into the heteroheptameric alpha ring and prevents alpha ring dimerization. This chain is Proteasome assembly chaperone 1, found in Mus musculus (Mouse).